Here is a 173-residue protein sequence, read N- to C-terminus: Large ribosomal subunit protein uL16 (173 aa).

It belongs to the universal ribosomal protein uL16 family.

In Methanococcus maripaludis (strain C6 / ATCC BAA-1332), this protein is Large ribosomal subunit protein uL16.